The chain runs to 233 residues: 2,3,4,5-tetrahydropyridine-2,6-dicarboxylate N-acetyltransferase (233 aa).

This sequence belongs to the transferase hexapeptide repeat family. DapH subfamily.

The catalysed reaction is (S)-2,3,4,5-tetrahydrodipicolinate + acetyl-CoA + H2O = L-2-acetamido-6-oxoheptanedioate + CoA. The protein operates within amino-acid biosynthesis; L-lysine biosynthesis via DAP pathway; LL-2,6-diaminopimelate from (S)-tetrahydrodipicolinate (acetylase route): step 1/3. In terms of biological role, catalyzes the transfer of an acetyl group from acetyl-CoA to tetrahydrodipicolinate. The sequence is that of 2,3,4,5-tetrahydropyridine-2,6-dicarboxylate N-acetyltransferase from Leuconostoc mesenteroides subsp. mesenteroides (strain ATCC 8293 / DSM 20343 / BCRC 11652 / CCM 1803 / JCM 6124 / NCDO 523 / NBRC 100496 / NCIMB 8023 / NCTC 12954 / NRRL B-1118 / 37Y).